The primary structure comprises 400 residues: Phosphoglycerate kinase (400 aa).

Substrate is bound by residues 22–24 (DFN), R38, 61–64 (HLGR), R119, and R152. Residues K205, G296, E327, and 353–356 (GGDT) contribute to the ATP site.

It belongs to the phosphoglycerate kinase family. As to quaternary structure, monomer.

The protein localises to the cytoplasm. The enzyme catalyses (2R)-3-phosphoglycerate + ATP = (2R)-3-phospho-glyceroyl phosphate + ADP. It functions in the pathway carbohydrate degradation; glycolysis; pyruvate from D-glyceraldehyde 3-phosphate: step 2/5. The protein is Phosphoglycerate kinase of Campylobacter jejuni subsp. doylei (strain ATCC BAA-1458 / RM4099 / 269.97).